The sequence spans 156 residues: Protein-export protein SecB (156 aa).

This sequence belongs to the SecB family. As to quaternary structure, homotetramer, a dimer of dimers. One homotetramer interacts with 1 SecA dimer.

It localises to the cytoplasm. Functionally, one of the proteins required for the normal export of preproteins out of the cell cytoplasm. It is a molecular chaperone that binds to a subset of precursor proteins, maintaining them in a translocation-competent state. It also specifically binds to its receptor SecA. In Yersinia enterocolitica serotype O:8 / biotype 1B (strain NCTC 13174 / 8081), this protein is Protein-export protein SecB.